Consider the following 359-residue polypeptide: N-acetylneuraminate-9-phosphate synthase (359 aa).

3 positions are modified to N6-acetyllysine: Lys61, Lys74, and Lys79. Ser275 is modified (phosphoserine). Residue Lys290 is modified to N6-acetyllysine. The AFP-like domain occupies 294–353 (SVVAKVKIPAGTTLTLDMLTVKVGEPKGYPPEDIFNLAGKKVLVTIEEDDTVMEESVESH).

As to expression, ubiquitous.

The protein localises to the cytoplasm. The enzyme catalyses aldehydo-N-acetyl-D-mannosamine 6-phosphate + phosphoenolpyruvate + H2O = N-acetylneuraminate 9-phosphate + phosphate. Functionally, catalyzes condensation of phosphoenolpyruvate (PEP) and N-acetylmannosamine 6-phosphate (ManNAc-6-P) to synthesize N-acetylneuraminate-9-phosphate (Neu5Ac-9-P). Neu5Ac-9-P is the phosphorylated forms of sialic acid N-acetylneuraminic acid (Neu5Ac). In contrast with human ortholog, has no detectable activity towards D-mannose 6-phosphate. This chain is N-acetylneuraminate-9-phosphate synthase, found in Mus musculus (Mouse).